A 230-amino-acid polypeptide reads, in one-letter code: U2 small nuclear ribonucleoprotein A' (230 aa).

LRR repeat units follow at residues 19-40 (KDRE…PFFP), 41-62 (RLRM…LANS), and 65-86 (GLTT…DPLR). Residues 99-137 (NPVTRKEYYRLWIIWRIPSVRFLDYQKVKDAERAKAAEL) form the LRRCT domain. A disordered region spans residues 211-230 (GRIPGGALDGAGNDGDQMQL). The segment covering 213–223 (IPGGALDGAGN) has biased composition (gly residues).

The protein belongs to the U2 small nuclear ribonucleoprotein A family. Associated with the spliceosome.

The protein resides in the nucleus. Its function is as follows. Involved in pre-mRNA splicing. The protein is U2 small nuclear ribonucleoprotein A' (lea1) of Emericella nidulans (strain FGSC A4 / ATCC 38163 / CBS 112.46 / NRRL 194 / M139) (Aspergillus nidulans).